The chain runs to 342 residues: Protein FinQ (342 aa).

The H-T-H motif DNA-binding region spans 208-227; sequence RDREFNLLNAQISMVLYICS.

Its function is as follows. Transcriptional inhibitor of the F plasmid transfer genes. FinQ may regulate a gene or genes encoded on the IncI plasmids, and coincidentally may inhibit F transfer when coresident. The sequence is that of Protein FinQ (finQ) from Escherichia coli.